Consider the following 306-residue polypeptide: Metal ABC transporter substrate-binding lipoprotein SloC (306 aa).

A signal peptide spans Met1–Ala19. The N-palmitoyl cysteine moiety is linked to residue Cys20. The S-diacylglycerol cysteine moiety is linked to residue Cys20. 4 residues coordinate a divalent metal cation: His64, His136, Glu202, and Asp277.

It belongs to the bacterial solute-binding protein 9 family. Lipoprotein receptor antigen (Lrai) subfamily.

Its subcellular location is the cell membrane. Its function is as follows. Part of the ATP-binding cassette (ABC) transport system SloABC involved in metal import. Binds a metal with high affinity and specificity and delivers it to the membrane permease for translocation into the cytoplasm. May act as an adhesin which is involved on adherence to extracellular matrix. It is an important factor in pathogenesis and infection. May contribute to the formation and accumulation of dental plaque. The chain is Metal ABC transporter substrate-binding lipoprotein SloC (sloC) from Streptococcus mutans serotype c (strain ATCC 700610 / UA159).